The chain runs to 96 residues: uncharacterized protein (96 aa).

This is an uncharacterized protein from Homo sapiens (Human).